Reading from the N-terminus, the 92-residue chain is UPF0250 protein XCC3453 (92 aa).

Belongs to the UPF0250 family.

This is UPF0250 protein XCC3453 from Xanthomonas campestris pv. campestris (strain ATCC 33913 / DSM 3586 / NCPPB 528 / LMG 568 / P 25).